Here is a 455-residue protein sequence, read N- to C-terminus: Probable glycine dehydrogenase (decarboxylating) subunit 1 (455 aa).

The protein belongs to the GcvP family. N-terminal subunit subfamily. As to quaternary structure, the glycine cleavage system is composed of four proteins: P, T, L and H. In this organism, the P 'protein' is a heterodimer of two subunits.

The catalysed reaction is N(6)-[(R)-lipoyl]-L-lysyl-[glycine-cleavage complex H protein] + glycine + H(+) = N(6)-[(R)-S(8)-aminomethyldihydrolipoyl]-L-lysyl-[glycine-cleavage complex H protein] + CO2. Functionally, the glycine cleavage system catalyzes the degradation of glycine. The P protein binds the alpha-amino group of glycine through its pyridoxal phosphate cofactor; CO(2) is released and the remaining methylamine moiety is then transferred to the lipoamide cofactor of the H protein. This Francisella tularensis subsp. mediasiatica (strain FSC147) protein is Probable glycine dehydrogenase (decarboxylating) subunit 1.